Reading from the N-terminus, the 249-residue chain is 5'-nucleotidase SurE (249 aa).

A divalent metal cation is bound by residues Asp-8, Asp-9, Ser-39, and Asn-91.

Belongs to the SurE nucleotidase family. A divalent metal cation is required as a cofactor.

Its subcellular location is the cytoplasm. The catalysed reaction is a ribonucleoside 5'-phosphate + H2O = a ribonucleoside + phosphate. In terms of biological role, nucleotidase that shows phosphatase activity on nucleoside 5'-monophosphates. This Ectopseudomonas mendocina (strain ymp) (Pseudomonas mendocina) protein is 5'-nucleotidase SurE.